We begin with the raw amino-acid sequence, 136 residues long: Histone H3.2 (136 aa).

The interval 1-43 is disordered; the sequence is MARTKQTARKSTGGKAPRKQLATKAARKSAPATGGVKKPHRFR. The residue at position 5 (lysine 5) is an N6-methylated lysine. Lysine 10 is modified (N6-acetyllysine; alternate). Position 10 is an N6-methylated lysine; alternate (lysine 10). Position 11 is a phosphoserine (serine 11). Residue threonine 12 is modified to Phosphothreonine. An N6-acetyllysine modification is found at lysine 15. N6-acetyllysine; alternate is present on residues lysine 19 and lysine 24. N6-methylated lysine; alternate occurs at positions 19 and 24. At lysine 28 the chain carries N6-methylated lysine. Residue serine 29 is modified to Phosphoserine. Lysine 37 carries the post-translational modification N6-methylated lysine.

Belongs to the histone H3 family. As to quaternary structure, the nucleosome is a histone octamer containing two molecules each of H2A, H2B, H3 and H4 assembled in one H3-H4 heterotetramer and two H2A-H2B heterodimers. The octamer wraps approximately 147 bp of DNA. Acetylation is generally linked to gene activation. Can be acetylated to form H3K9ac, H3K14ac, H3K18ac and H3K23ac. H3K9ac could compete with H3K9me and prevent gene silencing. H3K9ac is restricted to euchromatin. Post-translationally, methylated to form mainly H3K4me, H3K9me, H3K18me, H3K23me, H3K27me and H3K36me. H3K4me1/2/3, H3K9me3, H3K27me3 and H3K36me1/2/3 are typical marks for euchromatin, whereas heterochromatic chromocenters are enriched in H3K9me1/2 and H3K27me1/2. H2BK143ub1 is probably prerequisite for H3K4me. In terms of processing, can be phosphorylated to form H3S10ph, H3T11ph and H3S28ph.

It is found in the nucleus. The protein resides in the chromosome. Its function is as follows. Core component of nucleosome. Nucleosomes wrap and compact DNA into chromatin, limiting DNA accessibility to the cellular machineries which require DNA as a template. Histones thereby play a central role in transcription regulation, DNA repair, DNA replication and chromosomal stability. DNA accessibility is regulated via a complex set of post-translational modifications of histones, also called histone code, and nucleosome remodeling. The sequence is that of Histone H3.2 from Encephalartos altensteinii (Altenstein's bread tree).